The primary structure comprises 694 residues: Putative ankyrin repeat protein RBE_0921 (694 aa).

ANK repeat units lie at residues 122 to 151, 155 to 185, 216 to 245, 249 to 275, 279 to 317, 321 to 350, 351 to 382, 384 to 413, 423 to 452, and 456 to 485; these read LGKTPLQYAIINDKPELAKLLIDAGANINV, NGRNLFELAMYNSASDQTFELLLKTNININS, FNRTLLHQAAERNNIKKAQISINHNINVEA, TGETALHMLKTSKMAKILLKAGSNTEA, LGRTPLHNAILQANKRQVNIKNIHNIVLKLIKSGANPNA, YGFTPLEYAIRINDSKIFKLLIKNNAKFKK, NRYELFCQALESGNLTATKYLFKKEFLNNIND, NGQNYLYYIATGGNKEVLEYLVKKNHDNGK, QRNTPIHIAAQNGQFEIIKNFQKLGFDINA, and DGETVLHILARAQNGEMIKELIKLGADINI.

This Rickettsia bellii (strain RML369-C) protein is Putative ankyrin repeat protein RBE_0921.